Reading from the N-terminus, the 213-residue chain is Putative manganese efflux pump MntP (213 aa).

A run of 6 helical transmembrane segments spans residues 3–23 (ILSI…VSVA), 36–56 (ALKV…IGWG), 67–87 (AFDH…MIFE), 130–150 (LAIA…FLGI), 152–172 (IVQT…LGVI), and 187–207 (IVGG…HTGI).

This sequence belongs to the MntP (TC 9.B.29) family.

The protein localises to the cell membrane. Functionally, probably functions as a manganese efflux pump. This chain is Putative manganese efflux pump MntP, found in Clostridium perfringens (strain ATCC 13124 / DSM 756 / JCM 1290 / NCIMB 6125 / NCTC 8237 / Type A).